The primary structure comprises 130 residues: Small ribosomal subunit protein bS6 (130 aa).

Residues 100–130 (SPMVKAKDERRERHDFASEANDDSEAGDSEE) are disordered. Over residues 104 to 116 (KAKDERRERHDFA) the composition is skewed to basic and acidic residues. Residues 119–130 (ANDDSEAGDSEE) show a composition bias toward acidic residues.

The protein belongs to the bacterial ribosomal protein bS6 family.

Binds together with bS18 to 16S ribosomal RNA. This chain is Small ribosomal subunit protein bS6, found in Yersinia pestis (strain Pestoides F).